The chain runs to 272 residues: 2,3,4,5-tetrahydropyridine-2,6-dicarboxylate N-succinyltransferase (272 aa).

Residues Arg-104 and Asp-141 each contribute to the substrate site.

It belongs to the transferase hexapeptide repeat family. As to quaternary structure, homotrimer.

The protein resides in the cytoplasm. It catalyses the reaction (S)-2,3,4,5-tetrahydrodipicolinate + succinyl-CoA + H2O = (S)-2-succinylamino-6-oxoheptanedioate + CoA. It functions in the pathway amino-acid biosynthesis; L-lysine biosynthesis via DAP pathway; LL-2,6-diaminopimelate from (S)-tetrahydrodipicolinate (succinylase route): step 1/3. The chain is 2,3,4,5-tetrahydropyridine-2,6-dicarboxylate N-succinyltransferase from Dechloromonas aromatica (strain RCB).